Consider the following 242-residue polypeptide: Glucosamine-6-phosphate deaminase (242 aa).

Asp-71 acts as the Proton acceptor; for enolization step in catalysis. Asn-142 serves as the catalytic For ring-opening step. His-144 acts as the Proton acceptor; for ring-opening step in catalysis. Glu-149 functions as the For ring-opening step in the catalytic mechanism.

Belongs to the glucosamine/galactosamine-6-phosphate isomerase family. NagB subfamily.

It catalyses the reaction alpha-D-glucosamine 6-phosphate + H2O = beta-D-fructose 6-phosphate + NH4(+). It functions in the pathway amino-sugar metabolism; N-acetylneuraminate degradation; D-fructose 6-phosphate from N-acetylneuraminate: step 5/5. Catalyzes the reversible isomerization-deamination of glucosamine 6-phosphate (GlcN6P) to form fructose 6-phosphate (Fru6P) and ammonium ion. This is Glucosamine-6-phosphate deaminase from Malacoplasma penetrans (strain HF-2) (Mycoplasma penetrans).